We begin with the raw amino-acid sequence, 294 residues long: Acetylglutamate kinase (294 aa).

Substrate is bound by residues 47-48 (GG), Arg69, and Asn168.

It belongs to the acetylglutamate kinase family. ArgB subfamily.

It localises to the cytoplasm. The enzyme catalyses N-acetyl-L-glutamate + ATP = N-acetyl-L-glutamyl 5-phosphate + ADP. The protein operates within amino-acid biosynthesis; L-arginine biosynthesis; N(2)-acetyl-L-ornithine from L-glutamate: step 2/4. Its function is as follows. Catalyzes the ATP-dependent phosphorylation of N-acetyl-L-glutamate. In Corynebacterium glutamicum (strain ATCC 13032 / DSM 20300 / JCM 1318 / BCRC 11384 / CCUG 27702 / LMG 3730 / NBRC 12168 / NCIMB 10025 / NRRL B-2784 / 534), this protein is Acetylglutamate kinase.